Consider the following 255-residue polypeptide: Hemin import ATP-binding protein HmuV (255 aa).

The ABC transporter domain maps to L2–D238. G34–S41 contributes to the ATP binding site.

Belongs to the ABC transporter superfamily. Heme (hemin) importer (TC 3.A.1.14.5) family. As to quaternary structure, the complex is composed of two ATP-binding proteins (HmuV), two transmembrane proteins (HmuU) and a solute-binding protein (HmuT).

It localises to the cell inner membrane. In terms of biological role, part of the ABC transporter complex HmuTUV involved in hemin import. Responsible for energy coupling to the transport system. This Pseudomonas entomophila (strain L48) protein is Hemin import ATP-binding protein HmuV.